Here is a 724-residue protein sequence, read N- to C-terminus: Pre-mRNA-splicing factor CLF1 (724 aa).

HAT repeat units lie at residues 55–87, 89–121, 123–155, 157–188, 190–221, 223–262, 264–298, 308–340, 352–386, 396–432, 434–465, 467–499, 501–534, 536–567, 585–626, and 635–667; these read EFQA…WEAS, NEYE…MELK, RNIN…LEEL, LNVS…LEER, NELD…FEED, GQPD…METR, KEFE…FEKQ, TVLG…LEED, VEPM…LWLQ, KDYD…FEIR, LDVS…LEMR, REFD…VESA, EDFE…FEAG, GERE…MEIA, GDAD…EHGD, and DMLP…DDEK. The tract at residues 681 to 724 is disordered; that stretch reads QAWAQQRAGQGEEGGLSYDLPSDSESENEDEDGDNREEEGMDQD. Acidic residues predominate over residues 702-724; it reads SDSESENEDEDGDNREEEGMDQD.

The protein belongs to the crooked-neck family. In terms of assembly, associated with the spliceosome.

The protein resides in the nucleus. Functionally, involved in pre-mRNA splicing and cell cycle progression. Required for the spliceosome assembly and initiation of the DNA replication. This chain is Pre-mRNA-splicing factor CLF1 (CLF1), found in Cryptococcus neoformans var. grubii serotype A (strain H99 / ATCC 208821 / CBS 10515 / FGSC 9487) (Filobasidiella neoformans var. grubii).